Reading from the N-terminus, the 106-residue chain is L-rhamnose mutarotase (106 aa).

Tyr20 is a binding site for substrate. Catalysis depends on His24, which acts as the Proton donor. Residues Tyr43 and 78–79 each bind substrate; that span reads WW.

The protein belongs to the rhamnose mutarotase family. In terms of assembly, homodimer.

It localises to the cytoplasm. The enzyme catalyses alpha-L-rhamnose = beta-L-rhamnose. It functions in the pathway carbohydrate metabolism; L-rhamnose metabolism. Involved in the anomeric conversion of L-rhamnose. The protein is L-rhamnose mutarotase of Rhizobium etli (strain ATCC 51251 / DSM 11541 / JCM 21823 / NBRC 15573 / CFN 42).